Consider the following 534-residue polypeptide: Anther-specific proline-rich protein APG (534 aa).

The first 35 residues, 1 to 35, serve as a signal peptide directing secretion; that stretch reads MKRSSLVDSCSYSRIFRSIFCLLSFCIFFLTTTNA. Residues 59-196 show a composition bias toward pro residues; sequence NPPTPDPSPK…SPKPAPSPPK (138 aa). The segment at 59 to 202 is disordered; sequence NPPTPDPSPK…SPPKPENKTI (144 aa). Ser211 serves as the catalytic Nucleophile. Active-site residues include Asp508 and His511.

It belongs to the 'GDSL' lipolytic enzyme family. In terms of tissue distribution, found in sporophytic and gametophytic cell types in the anther, only in male fertile plants.

This chain is Anther-specific proline-rich protein APG (APG), found in Arabidopsis thaliana (Mouse-ear cress).